Here is a 368-residue protein sequence, read N- to C-terminus: 3-dehydroquinate synthase (368 aa).

Residues 71 to 76 (DGEAFK), 105 to 109 (GVVGD), 129 to 130 (TT), Lys-142, Lys-151, and 169 to 172 (TLRT) each bind NAD(+). Positions 184, 247, and 264 each coordinate Zn(2+).

It belongs to the sugar phosphate cyclases superfamily. Dehydroquinate synthase family. Co(2+) is required as a cofactor. Requires Zn(2+) as cofactor. NAD(+) serves as cofactor.

Its subcellular location is the cytoplasm. It catalyses the reaction 7-phospho-2-dehydro-3-deoxy-D-arabino-heptonate = 3-dehydroquinate + phosphate. The protein operates within metabolic intermediate biosynthesis; chorismate biosynthesis; chorismate from D-erythrose 4-phosphate and phosphoenolpyruvate: step 2/7. Catalyzes the conversion of 3-deoxy-D-arabino-heptulosonate 7-phosphate (DAHP) to dehydroquinate (DHQ). This Cupriavidus necator (strain ATCC 17699 / DSM 428 / KCTC 22496 / NCIMB 10442 / H16 / Stanier 337) (Ralstonia eutropha) protein is 3-dehydroquinate synthase.